The following is a 447-amino-acid chain: ATP-dependent protease ATPase subunit HslU (447 aa).

ATP-binding positions include Ile-18, 60–65, Asp-259, Glu-325, and Arg-397; that span reads GVGKTE.

This sequence belongs to the ClpX chaperone family. HslU subfamily. A double ring-shaped homohexamer of HslV is capped on each side by a ring-shaped HslU homohexamer. The assembly of the HslU/HslV complex is dependent on binding of ATP.

It is found in the cytoplasm. In terms of biological role, ATPase subunit of a proteasome-like degradation complex; this subunit has chaperone activity. The binding of ATP and its subsequent hydrolysis by HslU are essential for unfolding of protein substrates subsequently hydrolyzed by HslV. HslU recognizes the N-terminal part of its protein substrates and unfolds these before they are guided to HslV for hydrolysis. This Burkholderia cenocepacia (strain HI2424) protein is ATP-dependent protease ATPase subunit HslU.